The sequence spans 101 residues: uncharacterized protein (101 aa).

A helical membrane pass occupies residues 72-94; sequence ILCPSFLNYSFINIYCFGPYTMV.

It is found in the membrane. This is an uncharacterized protein from Schizosaccharomyces pombe (strain 972 / ATCC 24843) (Fission yeast).